Reading from the N-terminus, the 80-residue chain is Calmodulin (80 aa).

EF-hand domains follow at residues 12 to 47 (DSEEEIREAFRVFDKDGNGFISAAELRHVMTNLGEK) and 48 to 80 (LTDEEVDEMIREADIDGDGQVNYEEFVAMMTSK). Ca(2+) contacts are provided by Asp25, Asp27, Asn29, Glu36, Asp61, Asp63, Asp65, Gln67, and Glu72.

This sequence belongs to the calmodulin family.

Its function is as follows. Calmodulin mediates the control of a large number of enzymes, ion channels and other proteins by Ca(2+). Among the enzymes to be stimulated by the calmodulin-Ca(2+) complex are a number of protein kinases and phosphatases. The polypeptide is Calmodulin (Strongylocentrotus purpuratus (Purple sea urchin)).